The chain runs to 186 residues: Ribonuclease M5 (186 aa).

Residues 6 to 89 (SQVIVVEGRD…AFLKRDEAVP (84 aa)) enclose the Toprim domain. The Mg(2+) site is built by Glu12, Asp58, and Asp60.

This sequence belongs to the ribonuclease M5 family. Mg(2+) is required as a cofactor.

It localises to the cytoplasm. The catalysed reaction is Endonucleolytic cleavage of RNA, removing 21 and 42 nucleotides, respectively, from the 5'- and 3'-termini of a 5S-rRNA precursor.. In terms of biological role, required for correct processing of both the 5' and 3' ends of 5S rRNA precursor. Cleaves both sides of a double-stranded region yielding mature 5S rRNA in one step. The protein is Ribonuclease M5 of Streptococcus pneumoniae (strain ATCC BAA-255 / R6).